The following is a 60-amino-acid chain: Light-harvesting polypeptide B-885 alpha-2 chain (60 aa).

Over 1-16 the chain is Cytoplasmic; that stretch reads SAPAQWKLWLVMDPRT. Residues 17–37 form a helical membrane-spanning segment; that stretch reads VMIGTAAWLGVLALLIHFLLL. His-33 contacts a bacteriochlorophyll. The Periplasmic portion of the chain corresponds to 38-60; sequence GTERFNWIDTGLKEQKATAAAQA.

The protein belongs to the antenna complex alpha subunit family. In terms of assembly, the core complex is formed by different alpha and beta chains, binding bacteriochlorophyll molecules, and arranged most probably in tetrameric structures disposed around the reaction center. The non-pigmented gamma chains may constitute additional components.

The protein localises to the cell inner membrane. Antenna complexes are light-harvesting systems, which transfer the excitation energy to the reaction centers. In Rhodocyclus tenuis (Rhodospirillum tenue), this protein is Light-harvesting polypeptide B-885 alpha-2 chain.